Consider the following 1465-residue polypeptide: Vacuolar heme ABC transmembrane exporter abc3 (1465 aa).

Over 1-8 the chain is Extracellular; it reads MITANKGL. A helical transmembrane segment spans residues 9 to 29; the sequence is SLVLLIPNLFALVSGGLQYVF. The Cytoplasmic portion of the chain corresponds to 30 to 42; the sequence is DVRRRIFRPHFSQ. The helical transmembrane segment at 43 to 63 threads the bilayer; the sequence is FWTIWMKFFSIALVIITQIYV. The Extracellular segment spans residues 64 to 69; the sequence is GYKTKN. Residues 70 to 90 traverse the membrane as a helical segment; the sequence is IGWNFFSVVTYCFVLFLQFAE. Residues 91–97 are Cytoplasmic-facing; the sequence is QSTLRVP. Residues 98–118 form a helical membrane-spanning segment; it reads MASLLIFWLLKVVTSLLILLF. At 119 to 129 the chain is on the extracellular side; sequence SPYIAITSMAR. The chain crosses the membrane as a helical span at residues 130-150; it reads LLTLITLFCSLVCFISEVYVP. 151 to 152 is a heme binding site; it reads PC. At 151-235 the chain is on the cytoplasmic side; the sequence is PCNRVWYSDD…IYHSKNKRRS (85 aa). The helical transmembrane segment at 236–256 threads the bilayer; sequence LFLWKLLFFNHWKLVALITIT. Residues 250 to 539 enclose the ABC transmembrane type-1 1 domain; it reads VALITITKLI…LPTVISSLLE (290 aa). Residues 257-291 are Extracellular-facing; sequence KLIQDVLAFVQPTLIQKTILFISSYTSPNPESPSR. The helical transmembrane segment at 292–312 threads the bilayer; it reads GFIIAILVLVANFLQTLLLQQ. The Cytoplasmic portion of the chain corresponds to 313–362; it reads YNQLIMLLGMRWKTELLASIYRKSLLLSSSARQNRSIGDIINYMAVDTQK. Residues 363-383 traverse the membrane as a helical segment; it reads ISDLPIYLFIIVSGPFQIALA. Residues 384 to 394 are Extracellular-facing; the sequence is LSNLYHLMGYS. Residues 395–415 form a helical membrane-spanning segment; it reads AFTGVAASVILFPCNIIVANV. Over 416–480 the chain is Cytoplasmic; that stretch reads YKKFQSILMK…KIGFITAIGD (65 aa). A helical transmembrane segment spans residues 481–501; it reads FAWIFTTIIVTTVAFGAFIIF. Topologically, residues 502–511 are extracellular; sequence HGKTQALTAD. Residues 512–532 traverse the membrane as a helical segment; sequence IVFPAVSLFNLLQFPLAMLPT. The Cytoplasmic portion of the chain corresponds to 533–899; the sequence is VISSLLEASV…VYWMYFKSCS (367 aa). The 230-residue stretch at 575–804 folds into the ABC transporter 1 domain; it reads LEIKSGTFSW…TNSELKQQLS (230 aa). 614–621 is an ATP binding site; that stretch reads GKVGAGKS. 2 disordered regions span residues 805 to 824 and 840 to 869; these read EFND…SYPS and TYSS…TEDD. Residues 900-920 form a helical membrane-spanning segment; that stretch reads IGLILLYFFFIISGIMMNVAT. In terms of domain architecture, ABC transmembrane type-1 2 spans 903 to 1189; the sequence is ILLYFFFIIS…IVQQSVDAEN (287 aa). Topologically, residues 921 to 939 are extracellular; it reads NVWLKHWSEENGKSSSELN. Residues 940-960 traverse the membrane as a helical segment; that stretch reads PSPYFYLGIYLFFGFLSCAFI. Topologically, residues 961-1033 are cytoplasmic; sequence SSSSLTMTVL…FFFRNSIQVL (73 aa). A helical transmembrane segment spans residues 1034–1054; that stretch reads FILGVICYSAPLSLLLIVPLF. Residues 1055 to 1465 are Extracellular-facing; it reads FLYLYNRAYY…YSLAKESGLI (411 aa). The region spanning 1226 to 1460 is the ABC transporter 2 domain; sequence VSFNHYSAKY…KDSMFYSLAK (235 aa). 1260 to 1267 lines the ATP pocket; sequence GRTGAGKS.

Belongs to the ABC transporter superfamily.

It is found in the vacuole membrane. Functionally, iron-regulated vacuolar transporter that mobilizes stored heme from the vacuole to the cytosol in response to iron deficiency. The sequence is that of Vacuolar heme ABC transmembrane exporter abc3 from Schizosaccharomyces pombe (strain 972 / ATCC 24843) (Fission yeast).